A 741-amino-acid polypeptide reads, in one-letter code: NAD(P)H-quinone oxidoreductase subunit 5, chloroplastic (741 aa).

Transmembrane regions (helical) follow at residues 9 to 29 (WIIP…LLLF), 40 to 60 (WAFQ…NLSI), 89 to 109 (IDPL…MVLI), 125 to 145 (FAYM…SNLI), 147 to 167 (IYIF…FWFT), 185 to 205 (GDFG…SFEF), 219 to 239 (NEVN…GAIA), 258 to 278 (TPIS…FLVA), 284 to 304 (FIVI…TVFF), 327 to 347 (LGYM…FHLI), 354 to 374 (ALLF…VGYC), 396 to 416 (NSFL…CFWS), 425 to 445 (WLYS…TAFY), 549 to 569 (LFPI…GIPF), 605 to 625 (VFSV…YKPV), and 721 to 741 (YLFF…FLNF).

This sequence belongs to the complex I subunit 5 family. NDH is composed of at least 16 different subunits, 5 of which are encoded in the nucleus.

The protein resides in the plastid. It is found in the chloroplast thylakoid membrane. The catalysed reaction is a plastoquinone + NADH + (n+1) H(+)(in) = a plastoquinol + NAD(+) + n H(+)(out). It carries out the reaction a plastoquinone + NADPH + (n+1) H(+)(in) = a plastoquinol + NADP(+) + n H(+)(out). NDH shuttles electrons from NAD(P)H:plastoquinone, via FMN and iron-sulfur (Fe-S) centers, to quinones in the photosynthetic chain and possibly in a chloroplast respiratory chain. The immediate electron acceptor for the enzyme in this species is believed to be plastoquinone. Couples the redox reaction to proton translocation, and thus conserves the redox energy in a proton gradient. The polypeptide is NAD(P)H-quinone oxidoreductase subunit 5, chloroplastic (ndhF) (Flaveria ramosissima (Yellowtops)).